Reading from the N-terminus, the 208-residue chain is MAIYKQITAEQVEALCSGFYAGVDEVGRGPLVGDVVTAAVVLDPNNPIEGLNDSKKLSEKKRDALYEEILAKALDVSVGRCSPLEIDELNILHATMLAMQRAVAGLRARPDRVLIDGNRVPDFTDETLEGHAVIKGDGLIPAISAASIVAKVVRDREMEALDERYPEYGFAKHKGYPTKAHFEALEAHGVLAEHRKSFRPVKERLEAC.

An RNase H type-2 domain is found at 18 to 208; sequence GFYAGVDEVG…RPVKERLEAC (191 aa). A divalent metal cation is bound by residues Asp24, Glu25, and Asp116.

The protein belongs to the RNase HII family. Mn(2+) serves as cofactor. It depends on Mg(2+) as a cofactor.

It is found in the cytoplasm. The enzyme catalyses Endonucleolytic cleavage to 5'-phosphomonoester.. Functionally, endonuclease that specifically degrades the RNA of RNA-DNA hybrids. This is Ribonuclease HII from Shewanella loihica (strain ATCC BAA-1088 / PV-4).